The following is a 248-amino-acid chain: Ubiquinone/menaquinone biosynthesis C-methyltransferase UbiE (248 aa).

Residues serine 68 and aspartate 92 each contribute to the S-adenosyl-L-methionine site.

The protein belongs to the class I-like SAM-binding methyltransferase superfamily. MenG/UbiE family.

The catalysed reaction is a 2-demethylmenaquinol + S-adenosyl-L-methionine = a menaquinol + S-adenosyl-L-homocysteine + H(+). It catalyses the reaction a 2-methoxy-6-(all-trans-polyprenyl)benzene-1,4-diol + S-adenosyl-L-methionine = a 5-methoxy-2-methyl-3-(all-trans-polyprenyl)benzene-1,4-diol + S-adenosyl-L-homocysteine + H(+). Its pathway is quinol/quinone metabolism; menaquinone biosynthesis; menaquinol from 1,4-dihydroxy-2-naphthoate: step 2/2. The protein operates within cofactor biosynthesis; ubiquinone biosynthesis. Methyltransferase required for the conversion of demethylmenaquinol (DMKH2) to menaquinol (MKH2) and the conversion of 2-polyprenyl-6-methoxy-1,4-benzoquinol (DDMQH2) to 2-polyprenyl-3-methyl-6-methoxy-1,4-benzoquinol (DMQH2). This chain is Ubiquinone/menaquinone biosynthesis C-methyltransferase UbiE, found in Rickettsia peacockii (strain Rustic).